Here is a 289-residue protein sequence, read N- to C-terminus: Early E4 34 kDa protein (289 aa).

It belongs to the adenoviridae E4 30 to 34 kDa protein family. In terms of assembly, interacts with E1B-55k.

Its subcellular location is the host nucleus. The protein resides in the host cytoplasm. Its function is as follows. Plays a major role to prevent cellular inhibition of viral genome replication by nuclear bodies. Assembles an SCF-like E3 ubiquitin ligase complex based on the cellular proteins ELOB, ELOC, CUL5 and RBX1, in cooperation with viral E1B-55K. This viral RING-type ligase ubiquitinates cellular substrates prior to proteasomal degradation: p53/TP53, LIG4, MRE11-RAD50-NBS1 (MRN) complex, ITGA3, DAXX and BLM. This is Early E4 34 kDa protein from Human adenovirus F serotype 40 (HAdV-40).